The sequence spans 169 residues: Peptide methionine sulfoxide reductase MsrA (169 aa).

Cysteine 10 is a catalytic residue.

This sequence belongs to the MsrA Met sulfoxide reductase family.

The enzyme catalyses L-methionyl-[protein] + [thioredoxin]-disulfide + H2O = L-methionyl-(S)-S-oxide-[protein] + [thioredoxin]-dithiol. It catalyses the reaction [thioredoxin]-disulfide + L-methionine + H2O = L-methionine (S)-S-oxide + [thioredoxin]-dithiol. Functionally, has an important function as a repair enzyme for proteins that have been inactivated by oxidation. Catalyzes the reversible oxidation-reduction of methionine sulfoxide in proteins to methionine. This chain is Peptide methionine sulfoxide reductase MsrA, found in Streptococcus pyogenes serotype M12 (strain MGAS2096).